Here is a 218-residue protein sequence, read N- to C-terminus: Probable carboxylesterase clz11 (218 aa).

Positions 7-9 (LVG) match the Involved in the stabilization of the negatively charged intermediate by the formation of the oxyanion hole motif. Ser-77 is a catalytic residue.

Belongs to the 'GDXG' lipolytic enzyme family.

The catalysed reaction is a carboxylic ester + H2O = an alcohol + a carboxylate + H(+). It participates in secondary metabolite biosynthesis. Functionally, probable carboxylesterase; part of the gene cluster that mediates the biosynthesis of squalestatin S1 (SQS1, also known as zaragozic acid A), a heavily oxidized fungal polyketide that offers potent cholesterol lowering activity by targeting squalene synthase (SS). SQS1 is composed of a 2,8-dioxobicyclic[3.2.1]octane-3,4,5-tricarboxyclic acid core that is connected to two lipophilic polyketide arms. These initial steps feature the priming of an unusual benzoic acid starter unit onto the highly reducing polyketide synthase clz14, followed by oxaloacetate extension and product release to generate a tricarboxylic acid containing product. The phenylalanine ammonia lyase (PAL) clz10 and the acyl-CoA ligase clz12 are involved in transforming phenylalanine into benzoyl-CoA. The citrate synthase-like protein clz17 is involved in connecting the C-alpha-carbons of the hexaketide chain and oxaloacetate to afford the tricarboxylic acid unit. The potential hydrolytic enzymes, clz11 and clz13, are in close proximity to pks2 and may participate in product release. On the other side, the tetraketide arm is synthesized by a the squalestatin tetraketide synthase clz2 and enzymatically esterified to the core in the last biosynthetic step, by the acetyltransferase clz6. The biosynthesis of the tetraketide must involve 3 rounds of chain extension. After the first and second rounds methyl-transfer occurs, and in all rounds of extension the ketoreductase and dehydratase are active. The enoyl reductase and C-MeT of clz2 are not active in the final round of extension. The acetyltransferase clz6 appears to have a broad substrate selectivity for its acyl CoA substrate, allowing the in vitro synthesis of novel squalestatins. The biosynthesis of SQS1 requires several oxidative steps likely performed by oxidoreductases clz3, clz15 and clz16. Finally, in support of the identification of the cluster as being responsible for SQS1 production, the cluster contains a gene encoding a putative squalene synthase (SS) clz20, suggesting a likely mechanism for self-resistance. The protein is Probable carboxylesterase clz11 of Cochliobolus lunatus (Filamentous fungus).